We begin with the raw amino-acid sequence, 310 residues long: Cysteine synthase (310 aa).

N6-(pyridoxal phosphate)lysine is present on Lys-46. Pyridoxal 5'-phosphate-binding positions include Asn-76, Gly-180–Thr-184, and Ser-268.

Belongs to the cysteine synthase/cystathionine beta-synthase family. In terms of assembly, homodimer. Pyridoxal 5'-phosphate is required as a cofactor.

It carries out the reaction O-acetyl-L-serine + hydrogen sulfide = L-cysteine + acetate. It functions in the pathway amino-acid biosynthesis; L-cysteine biosynthesis; L-cysteine from L-serine: step 2/2. In Staphylococcus aureus (strain Mu50 / ATCC 700699), this protein is Cysteine synthase (cysK).